Reading from the N-terminus, the 267-residue chain is Ribosomal RNA large subunit methyltransferase E (267 aa).

The S-adenosyl-L-methionine site is built by Gly52, Phe54, Asp72, Asp90, and Asp114. Lys154 functions as the Proton acceptor in the catalytic mechanism. Residues 212–252 show a composition bias toward low complexity; it reads EAPRAPAPPEQAAAPEEATAPATRAARQKPAPAKKPAAAKR. The segment at 212-267 is disordered; it reads EAPRAPAPPEQAAAPEEATAPATRAARQKPAPAKKPAAAKRPAARKRAAKKPARRA. Basic residues predominate over residues 253–267; it reads PAARKRAAKKPARRA.

The protein belongs to the class I-like SAM-binding methyltransferase superfamily. RNA methyltransferase RlmE family.

The protein resides in the cytoplasm. The catalysed reaction is uridine(2552) in 23S rRNA + S-adenosyl-L-methionine = 2'-O-methyluridine(2552) in 23S rRNA + S-adenosyl-L-homocysteine + H(+). In terms of biological role, specifically methylates the uridine in position 2552 of 23S rRNA at the 2'-O position of the ribose in the fully assembled 50S ribosomal subunit. This Anaeromyxobacter dehalogenans (strain 2CP-C) protein is Ribosomal RNA large subunit methyltransferase E.